The sequence spans 119 residues: Large ribosomal subunit protein bL20 (119 aa).

This sequence belongs to the bacterial ribosomal protein bL20 family.

Its function is as follows. Binds directly to 23S ribosomal RNA and is necessary for the in vitro assembly process of the 50S ribosomal subunit. It is not involved in the protein synthesizing functions of that subunit. The chain is Large ribosomal subunit protein bL20 from Dehalococcoides mccartyi (strain ATCC BAA-2266 / KCTC 15142 / 195) (Dehalococcoides ethenogenes (strain 195)).